The primary structure comprises 125 residues: Histone H1-like protein Hc1 (125 aa).

Residues 98–125 form a disordered region; the sequence is TKAKVKPTKKAAPKTKVKTAKKTRSTKK. Residues 100 to 125 show a composition bias toward basic residues; that stretch reads AKVKPTKKAAPKTKVKTAKKTRSTKK.

This sequence belongs to the histone H1/H5 family. HCT subfamily.

Might have a role analogous to that of eukaryotic histone proteins. The polypeptide is Histone H1-like protein Hc1 (hctA) (Chlamydia trachomatis serovar L2 (strain ATCC VR-902B / DSM 19102 / 434/Bu)).